Here is a 327-residue protein sequence, read N- to C-terminus: Protoheme IX farnesyltransferase (327 aa).

8 helical membrane passes run 35-55, 60-80, 106-126, 129-149, 157-177, 185-205, 234-254, and 283-303; these read LIPLLLATTLGGMALSEGWPL, LVCTLGGGALASAAAGVLNCL, SAFIGAIACTLAAAMLLVSGV, LAAGLSLLGLCSYVLLYTALL, IVIGGVAGAIPPLVGAAAATG, WLFALVMVWTPAHFWALALLL, GWITVLLSSLGVFALPSGGAF, and AKALFRWSILYLFGVCLLLIL.

It belongs to the UbiA prenyltransferase family. Protoheme IX farnesyltransferase subfamily.

The protein resides in the cell inner membrane. The enzyme catalyses heme b + (2E,6E)-farnesyl diphosphate + H2O = Fe(II)-heme o + diphosphate. Its pathway is porphyrin-containing compound metabolism; heme O biosynthesis; heme O from protoheme: step 1/1. Its function is as follows. Converts heme B (protoheme IX) to heme O by substitution of the vinyl group on carbon 2 of heme B porphyrin ring with a hydroxyethyl farnesyl side group. This is Protoheme IX farnesyltransferase from Synechococcus sp. (strain CC9605).